The primary structure comprises 160 residues: Phosphopantetheine adenylyltransferase (160 aa).

Thr-11 serves as a coordination point for substrate. Residues 11–12 (TF) and His-19 contribute to the ATP site. The substrate site is built by Lys-43, Thr-75, and Arg-89. Residues 90 to 92 (GLR), Glu-100, and 125 to 131 (YSFLSSS) contribute to the ATP site.

This sequence belongs to the bacterial CoaD family. As to quaternary structure, homohexamer. Mg(2+) serves as cofactor.

The protein localises to the cytoplasm. The catalysed reaction is (R)-4'-phosphopantetheine + ATP + H(+) = 3'-dephospho-CoA + diphosphate. It functions in the pathway cofactor biosynthesis; coenzyme A biosynthesis; CoA from (R)-pantothenate: step 4/5. Reversibly transfers an adenylyl group from ATP to 4'-phosphopantetheine, yielding dephospho-CoA (dPCoA) and pyrophosphate. The protein is Phosphopantetheine adenylyltransferase of Listeria monocytogenes serotype 4b (strain CLIP80459).